We begin with the raw amino-acid sequence, 904 residues long: Essential for maintenance of the cell wall protein 1 (904 aa).

6 TPR repeats span residues 510 to 544 (WQLD…ETAL), 563 to 596 (INEN…GKYV), 603 to 636 (AKYY…YPLS), 637 to 670 (FETW…DPYH), 671 to 704 (ALSW…DAQK), and 706 to 739 (WKIW…RRDK).

The protein belongs to the TTC27 family.

The protein resides in the cytoplasm. The protein localises to the nucleus. Required for the maintenance of the cell wall integrity. In Saccharomyces cerevisiae (strain ATCC 204508 / S288c) (Baker's yeast), this protein is Essential for maintenance of the cell wall protein 1 (EMW1).